The chain runs to 229 residues: Biosynthetic peptidoglycan transglycosylase (229 aa).

The helical transmembrane segment at 11-31 (NLLLALFLVLVAGPVVAVILY) threads the bilayer.

The protein belongs to the glycosyltransferase 51 family.

The protein resides in the cell inner membrane. It carries out the reaction [GlcNAc-(1-&gt;4)-Mur2Ac(oyl-L-Ala-gamma-D-Glu-L-Lys-D-Ala-D-Ala)](n)-di-trans,octa-cis-undecaprenyl diphosphate + beta-D-GlcNAc-(1-&gt;4)-Mur2Ac(oyl-L-Ala-gamma-D-Glu-L-Lys-D-Ala-D-Ala)-di-trans,octa-cis-undecaprenyl diphosphate = [GlcNAc-(1-&gt;4)-Mur2Ac(oyl-L-Ala-gamma-D-Glu-L-Lys-D-Ala-D-Ala)](n+1)-di-trans,octa-cis-undecaprenyl diphosphate + di-trans,octa-cis-undecaprenyl diphosphate + H(+). It functions in the pathway cell wall biogenesis; peptidoglycan biosynthesis. Its function is as follows. Peptidoglycan polymerase that catalyzes glycan chain elongation from lipid-linked precursors. This Caulobacter vibrioides (strain ATCC 19089 / CIP 103742 / CB 15) (Caulobacter crescentus) protein is Biosynthetic peptidoglycan transglycosylase.